Consider the following 345-residue polypeptide: Biotin synthase (345 aa).

The Radical SAM core domain occupies 38–256; the sequence is RQVQVSTLLS…IAVARIMMPS (219 aa). Positions 53, 57, and 60 each coordinate [4Fe-4S] cluster. The [2Fe-2S] cluster site is built by Cys-97, Cys-128, Cys-188, and Arg-260.

Belongs to the radical SAM superfamily. Biotin synthase family. Homodimer. [4Fe-4S] cluster is required as a cofactor. It depends on [2Fe-2S] cluster as a cofactor.

It catalyses the reaction (4R,5S)-dethiobiotin + (sulfur carrier)-SH + 2 reduced [2Fe-2S]-[ferredoxin] + 2 S-adenosyl-L-methionine = (sulfur carrier)-H + biotin + 2 5'-deoxyadenosine + 2 L-methionine + 2 oxidized [2Fe-2S]-[ferredoxin]. The protein operates within cofactor biosynthesis; biotin biosynthesis; biotin from 7,8-diaminononanoate: step 2/2. Functionally, catalyzes the conversion of dethiobiotin (DTB) to biotin by the insertion of a sulfur atom into dethiobiotin via a radical-based mechanism. The polypeptide is Biotin synthase (Yersinia pestis bv. Antiqua (strain Antiqua)).